The primary structure comprises 203 residues: ATP-dependent Clp protease proteolytic subunit (203 aa).

The active-site Nucleophile is serine 100. The active site involves histidine 125.

This sequence belongs to the peptidase S14 family. In terms of assembly, component of the chloroplastic Clp protease core complex.

The protein localises to the plastid. Its subcellular location is the chloroplast stroma. It catalyses the reaction Hydrolysis of proteins to small peptides in the presence of ATP and magnesium. alpha-casein is the usual test substrate. In the absence of ATP, only oligopeptides shorter than five residues are hydrolyzed (such as succinyl-Leu-Tyr-|-NHMec, and Leu-Tyr-Leu-|-Tyr-Trp, in which cleavage of the -Tyr-|-Leu- and -Tyr-|-Trp bonds also occurs).. Cleaves peptides in various proteins in a process that requires ATP hydrolysis. Has a chymotrypsin-like activity. Plays a major role in the degradation of misfolded proteins. In Dioscorea elephantipes (Elephant's foot yam), this protein is ATP-dependent Clp protease proteolytic subunit.